A 427-amino-acid polypeptide reads, in one-letter code: MSSIVDVIAREILDSRGNPTVECDVWLDSGVMGRAAVPSGASTGEKEALELRDGDARRYLGKGVLKAVEHVNNEICEALIGLDPTDQAYIDQTLLELDGTDNKGSLGANAILAVSVAVAKAAALEVGLPLYRYLGGSGPMSLPVPMMNVINGGAHANNTLDIQEFMIMPVGARSFREALRCGAEIFHTLKKICADKGYSTAVGDEGGFAPNLARNEDAIKLILEATDKAGYVPGEDVLIALDCASSEFYKDGKYHLAGENLALSSEEFTNYLATLCDNYPIISIEDGMSEHDWAGWKLLTDKLGDKVQLVGDDVFVTNPAILAEGIKQGICNSLLVKINQIGSLSETLKAVDLAKRSGYTSVMSHRSGETEDSTIADLAVATNCMQIKTGSLSRSDRMAKYNQLLRIEEELGSAASYPGRAAFYHLK.

Position 163 (Q163) interacts with (2R)-2-phosphoglycerate. Residue E205 is the Proton donor of the active site. 3 residues coordinate Mg(2+): D242, E285, and D312. (2R)-2-phosphoglycerate contacts are provided by K337, R366, S367, and K388. Catalysis depends on K337, which acts as the Proton acceptor.

It belongs to the enolase family. It depends on Mg(2+) as a cofactor.

It is found in the cytoplasm. Its subcellular location is the secreted. It localises to the cell surface. The catalysed reaction is (2R)-2-phosphoglycerate = phosphoenolpyruvate + H2O. The protein operates within carbohydrate degradation; glycolysis; pyruvate from D-glyceraldehyde 3-phosphate: step 4/5. In terms of biological role, catalyzes the reversible conversion of 2-phosphoglycerate (2-PG) into phosphoenolpyruvate (PEP). It is essential for the degradation of carbohydrates via glycolysis. This chain is Enolase, found in Laribacter hongkongensis (strain HLHK9).